We begin with the raw amino-acid sequence, 170 residues long: Lipoprotein signal peptidase (170 aa).

3 helical membrane-spanning segments follow: residues 12–32 (WYWV…WVLS), 67–87 (WQRW…SVWL), and 94–116 (MWRL…IDRL). Catalysis depends on residues aspartate 123 and aspartate 141. Residues 133-153 (HFPAFNIADSAICVGAALIIL) form a helical membrane-spanning segment.

This sequence belongs to the peptidase A8 family.

It localises to the cell inner membrane. It catalyses the reaction Release of signal peptides from bacterial membrane prolipoproteins. Hydrolyzes -Xaa-Yaa-Zaa-|-(S,diacylglyceryl)Cys-, in which Xaa is hydrophobic (preferably Leu), and Yaa (Ala or Ser) and Zaa (Gly or Ala) have small, neutral side chains.. It participates in protein modification; lipoprotein biosynthesis (signal peptide cleavage). Functionally, this protein specifically catalyzes the removal of signal peptides from prolipoproteins. The chain is Lipoprotein signal peptidase from Shewanella halifaxensis (strain HAW-EB4).